A 421-amino-acid polypeptide reads, in one-letter code: eIF5-mimic protein 1 (421 aa).

The tract at residues 1–24 is disordered; it reads MNTGKQQKPVLTGQRFKTRKRDEK. The region spanning 250-417 is the W2 domain; that stretch reads TQQTLGTRKE…QNAEEESESE (168 aa).

The protein belongs to the BZW family.

It localises to the cytoplasm. Its function is as follows. Translation initiation regulator which may repress non-AUG initiated translation and repeat-associated non-AUG (RAN) initiated translation by acting as a competitive inhibitor of eukaryotic translation initiation factor 5 (EIF5) function. The chain is eIF5-mimic protein 1 (bzw2) from Danio rerio (Zebrafish).